The sequence spans 267 residues: Probable ribosomal RNA small subunit methyltransferase A (267 aa).

S-adenosyl-L-methionine is bound by residues L12, G37, E58, D83, and N100.

It belongs to the class I-like SAM-binding methyltransferase superfamily. rRNA adenine N(6)-methyltransferase family. RsmA subfamily.

It is found in the cytoplasm. Functionally, specifically dimethylates two adjacent adenosines in the loop of a conserved hairpin near the 3'-end of 16S rRNA in the 30S particle. May play a critical role in biogenesis of 30S subunits. The sequence is that of Probable ribosomal RNA small subunit methyltransferase A from Methanococcus maripaludis (strain DSM 14266 / JCM 13030 / NBRC 101832 / S2 / LL).